The sequence spans 142 residues: Large ribosomal subunit protein uL13 (142 aa).

This sequence belongs to the universal ribosomal protein uL13 family. As to quaternary structure, part of the 50S ribosomal subunit.

Functionally, this protein is one of the early assembly proteins of the 50S ribosomal subunit, although it is not seen to bind rRNA by itself. It is important during the early stages of 50S assembly. The chain is Large ribosomal subunit protein uL13 from Vibrio vulnificus (strain CMCP6).